The primary structure comprises 46 residues: Large ribosomal subunit protein bL34 (46 aa).

The span at 1 to 17 shows a compositional bias: basic residues; sequence MTKRTLRGSVRKKKRTS. Positions 1-26 are disordered; it reads MTKRTLRGSVRKKKRTSGFRARMETP.

The protein belongs to the bacterial ribosomal protein bL34 family.

This Pseudanabaena sp. (strain PCC 6903) protein is Large ribosomal subunit protein bL34 (rpmH).